We begin with the raw amino-acid sequence, 468 residues long: Trehalose-binding lipoprotein LpqY (468 aa).

The first 25 residues, 1-25 (MVMSRGRIPRLGAAVLVALTTAAAA), serve as a signal peptide directing secretion. Residue Cys26 is the site of N-palmitoyl cysteine attachment. A lipid anchor (S-diacylglycerol cysteine) is attached at Cys26. An intrachain disulfide couples Cys54 to Cys372. 6 residues coordinate alpha,alpha-trehalose: Asp97, Asn151, Trp276, Phe278, Gly351, and Arg421.

Belongs to the bacterial solute-binding protein 1 family. In terms of assembly, monomer. The complex is composed of two ATP-binding proteins (SugC), two transmembrane proteins (SugA and SugB) and a solute-binding protein (LpqY).

The protein resides in the cell inner membrane. Its function is as follows. Part of the ABC transporter complex LpqY-SugA-SugB-SugC, which is highly specific for uptake of trehalose. Involved in the recycling of extracellular trehalose released from trehalose-containing molecules synthesized by M.tuberculosis. Trehalose uptake is essential for virulence. The polypeptide is Trehalose-binding lipoprotein LpqY (lpqY) (Mycobacterium tuberculosis (strain CDC 1551 / Oshkosh)).